We begin with the raw amino-acid sequence, 598 residues long: UvrABC system protein C (598 aa).

A GIY-YIG domain is found at 14-91 (DSPGCYLHKD…IQKNMPKYNI (78 aa)). The region spanning 196 to 231 (DKIIEDLRSKMLAASEEMAFERAAEYRDLISGIATM) is the UVR domain.

It belongs to the UvrC family. As to quaternary structure, interacts with UvrB in an incision complex.

The protein resides in the cytoplasm. The UvrABC repair system catalyzes the recognition and processing of DNA lesions. UvrC both incises the 5' and 3' sides of the lesion. The N-terminal half is responsible for the 3' incision and the C-terminal half is responsible for the 5' incision. The protein is UvrABC system protein C of Streptococcus pyogenes serotype M3 (strain ATCC BAA-595 / MGAS315).